A 285-amino-acid polypeptide reads, in one-letter code: Diphthine methyl ester synthase (285 aa).

S-adenosyl-L-methionine is bound by residues leucine 9, aspartate 84, glycine 87, 112–113 (SI), leucine 163, valine 221, and histidine 246.

It belongs to the diphthine synthase family.

Its subcellular location is the cytoplasm. The catalysed reaction is 2-[(3S)-amino-3-carboxypropyl]-L-histidyl-[translation elongation factor 2] + 4 S-adenosyl-L-methionine = diphthine methyl ester-[translation elongation factor 2] + 4 S-adenosyl-L-homocysteine + 3 H(+). The protein operates within protein modification; peptidyl-diphthamide biosynthesis. In terms of biological role, S-adenosyl-L-methionine-dependent methyltransferase that catalyzes four methylations of the modified target histidine residue in translation elongation factor 2 (EF-2), to form an intermediate called diphthine methyl ester. The four successive methylation reactions represent the second step of diphthamide biosynthesis. The protein is Diphthine methyl ester synthase (dph5) of Emericella nidulans (strain FGSC A4 / ATCC 38163 / CBS 112.46 / NRRL 194 / M139) (Aspergillus nidulans).